We begin with the raw amino-acid sequence, 25 residues long: Hemocyanin subunit 3 (25 aa).

It belongs to the tyrosinase family. Hemocyanin subfamily. Hemolymph.

The protein localises to the secreted. Its subcellular location is the extracellular space. In terms of biological role, hemocyanins are copper-containing oxygen carriers occurring freely dissolved in the hemolymph of many mollusks and arthropods. The polypeptide is Hemocyanin subunit 3 (Maja squinado (Mediterranean spider crab)).